The following is a 154-amino-acid chain: Fibroblast growth factor 2 (154 aa).

Positions 1–9 (MAASGITSL) are excised as a propeptide. Position 35 (asparagine 35) interacts with heparin. Tyrosine 81 is modified (phosphotyrosine; by TEC). Residue lysine 94 forms a Glycyl lysine isopeptide (Lys-Gly) (interchain with G-Cter in SUMO1) linkage. The tract at residues 127–143 (KRTGQYKLGSKTGPGQK) is heparin-binding.

The protein belongs to the heparin-binding growth factors family. As to quaternary structure, monomer. Homodimer. Interacts with FGFR1, FGFR2, FGFR3 and FGFR4. Affinity between fibroblast growth factors (FGFs) and their receptors is increased by heparan sulfate glycosaminoglycans that function as coreceptors. Interacts with CSPG4, FGFBP1 and TEC. Found in a complex with FGFBP1, FGF1 and FGF2. Interacts with FGFBP3. Interacts with integrin ITGAV:ITGB3; the interaction is required for FGF2 signaling. Interacts with SNORC (via the extracellular domain). Interacts with glypican GPC3. In terms of processing, phosphorylation at Tyr-81 regulates FGF2 unconventional secretion.

The protein localises to the secreted. The protein resides in the nucleus. Acts as a ligand for FGFR1, FGFR2, FGFR3 and FGFR4. Also acts as an integrin ligand which is required for FGF2 signaling. Binds to integrin ITGAV:ITGB3. Plays an important role in the regulation of cell survival, cell division, cell differentiation and cell migration. Functions as a potent mitogen in vitro. Can induce angiogenesis. Mediates phosphorylation of ERK1/2 and thereby promotes retinal lens fiber differentiation. This Mus musculus (Mouse) protein is Fibroblast growth factor 2 (Fgf2).